The primary structure comprises 308 residues: Tetraacyldisaccharide 4'-kinase (308 aa).

63-70 contributes to the ATP binding site; the sequence is SFGGNGKT.

It belongs to the LpxK family.

It carries out the reaction a lipid A disaccharide + ATP = a lipid IVA + ADP + H(+). Its pathway is glycolipid biosynthesis; lipid IV(A) biosynthesis; lipid IV(A) from (3R)-3-hydroxytetradecanoyl-[acyl-carrier-protein] and UDP-N-acetyl-alpha-D-glucosamine: step 6/6. Functionally, transfers the gamma-phosphate of ATP to the 4'-position of a tetraacyldisaccharide 1-phosphate intermediate (termed DS-1-P) to form tetraacyldisaccharide 1,4'-bis-phosphate (lipid IVA). The protein is Tetraacyldisaccharide 4'-kinase of Campylobacter jejuni subsp. jejuni serotype O:23/36 (strain 81-176).